The chain runs to 175 residues: Small ribosomal subunit protein uS4 (175 aa).

The S4 RNA-binding domain maps to 105–169 (RRLQTIVYRQ…SPLADSLHPA (65 aa)).

This sequence belongs to the universal ribosomal protein uS4 family. Part of the 30S ribosomal subunit. Contacts protein S5. The interaction surface between S4 and S5 is involved in control of translational fidelity.

One of the primary rRNA binding proteins, it binds directly to 16S rRNA where it nucleates assembly of the body of the 30S subunit. Functionally, with S5 and S12 plays an important role in translational accuracy. The chain is Small ribosomal subunit protein uS4 from Haloquadratum walsbyi (strain DSM 16790 / HBSQ001).